Reading from the N-terminus, the 660-residue chain is DNA ligase (660 aa).

NAD(+) contacts are provided by residues 33–37 (DFVYD), 82–83 (SL), and E110. K112 serves as the catalytic N6-AMP-lysine intermediate. R133, E167, K281, and K305 together coordinate NAD(+). The Zn(2+) site is built by C396, C399, C412, and C417. The BRCT domain maps to 583–660 (GENKLLAGKK…SFEDIKSYLD (78 aa)).

It belongs to the NAD-dependent DNA ligase family. LigA subfamily. The cofactor is Mg(2+). Mn(2+) is required as a cofactor.

It carries out the reaction NAD(+) + (deoxyribonucleotide)n-3'-hydroxyl + 5'-phospho-(deoxyribonucleotide)m = (deoxyribonucleotide)n+m + AMP + beta-nicotinamide D-nucleotide.. In terms of biological role, DNA ligase that catalyzes the formation of phosphodiester linkages between 5'-phosphoryl and 3'-hydroxyl groups in double-stranded DNA using NAD as a coenzyme and as the energy source for the reaction. It is essential for DNA replication and repair of damaged DNA. The polypeptide is DNA ligase (Borreliella burgdorferi (strain ATCC 35210 / DSM 4680 / CIP 102532 / B31) (Borrelia burgdorferi)).